The sequence spans 532 residues: Carboxypeptidase Y (532 aa).

An N-terminal signal peptide occupies residues 1-20; the sequence is MKAFTSLLCGLGLSTTLAKA. The propeptide at 21 to 111 is mediates translocation across the endoplasmic reticulum, renders the enzyme inactive during transit, and targets the molecule to the vacuole; the sequence is ISLQRPLGLD…AIENYQLRVN (91 aa). The Vacuolar targeting signal signature appears at 24-27; the sequence is QRPL. Asn124 and Asn198 each carry an N-linked (GlcNAc...) (high mannose) asparagine glycan. 5 disulfides stabilise this stretch: Cys167-Cys409, Cys304-Cys318, Cys328-Cys351, Cys335-Cys344, and Cys373-Cys379. Ser257 is a catalytic residue. Asn279 is a glycosylation site (N-linked (GlcNAc...) (high mannose) asparagine). Asp449 is an active-site residue. Position 452 (Cys452) interacts with substrate. Asn479 carries an N-linked (GlcNAc...) (high mannose) asparagine glycan. The active site involves His508. Met509 is a substrate binding site.

The protein belongs to the peptidase S10 family. Enters the endoplasmic reticulum as an inactive zymogen and is modified by four N-linked core oligosaccharides, giving rise to a precursor known as P1 (67 kDa). As P1 transits through the Golgi, extension of its core oligosaccharides leads to the Golgi-modified P2 precursor (69 kDa). P2 is sorted away from secretory proteins at or beyond a late Golgi compartment and is subsequently delivered to the vacuole via a prevacuolar endosome-like compartment. Upon arrival in the vacuole, the N-terminal prosegment of P2 is cleaved by vacuolar proteases to yield the enzymatically active mature vacuolar form of CPY (61 kDa). Post-translationally, the four high mannose core N-glycans found in mature CPY are Man(11-15)GlcNAc(2) at Asn-124, Man(8-12)GlcNAc(2) at Asn-198, Man(9-14)GlcNAc(2) at Asn-279 and phosphorylated Man(12-17)GlcNAc(2) as well as Man(11-16)GlcNAc(2) at Asn-479.

Its subcellular location is the vacuole lumen. The catalysed reaction is Release of a C-terminal amino acid with broad specificity.. Inhibited by ZPCK. In terms of biological role, vacuolar serine-type carboxypeptidase involved in degradation of small peptides. Digests preferentially peptides containing an aliphatic or hydrophobic residue in P1' position, as well as methionine, leucine or phenylalanine in P1 position of ester substrate. Also plays a role in breakdown of the autophagic body and the autophagosome-dependent protein synthesis. Plays a key role in phytochelatin (PC) synthesis from glutathione (GSH) by cleaving the Gly from GSH and form the PC-peptides of the structure (gamma-Glu-Cys)2-Gly. Also involved in resistance to xenobiotics via the degradation of glutathione-S-conjugates. This Saccharomyces cerevisiae (strain ATCC 204508 / S288c) (Baker's yeast) protein is Carboxypeptidase Y.